The chain runs to 29 residues: Cytochrome b6-f complex subunit 8 (29 aa).

A helical transmembrane segment spans residues isoleucine 3–valine 23.

This sequence belongs to the PetN family. In terms of assembly, the 4 large subunits of the cytochrome b6-f complex are cytochrome b6, subunit IV (17 kDa polypeptide, PetD), cytochrome f and the Rieske protein, while the 4 small subunits are PetG, PetL, PetM and PetN. The complex functions as a dimer.

The protein resides in the plastid. It is found in the chloroplast thylakoid membrane. Functionally, component of the cytochrome b6-f complex, which mediates electron transfer between photosystem II (PSII) and photosystem I (PSI), cyclic electron flow around PSI, and state transitions. The protein is Cytochrome b6-f complex subunit 8 of Phalaenopsis aphrodite subsp. formosana (Moth orchid).